The following is a 359-amino-acid chain: Trans-enoyl reductase RAP1 (359 aa).

An NADP(+)-binding site is contributed by 49 to 52; it reads CDFK. Substrate is bound at residue 137-144; it reads TCIATACM. NADP(+) contacts are provided by residues 195-198, Tyr213, and 260-261; these read SPKN and LE. 281-285 is a substrate binding site; the sequence is GQMIL. 350–351 contributes to the NADP(+) binding site; it reads VA.

Belongs to the zinc-containing alcohol dehydrogenase family. As to quaternary structure, monomer.

The protein operates within secondary metabolite biosynthesis. Its function is as follows. Trans-enoyl reductase; part of the gene cluster that mediates the biosynthesis of a tyrosine-derived cytochalasan acting as a fungal signal recognized by resistant rice plants and leads to avirulence in Pi33 resistant rice cultivars. The first step in the pathway is catalyzed by the hybrid PKS-NRPS ACE1, assisted by the enoyl reductase RAP1, that are responsible for fusion of the tyrosine precursor and the polyketide backbone. The polyketide synthase module (PKS) of ACE1 is responsible for the synthesis of the polyketide backbone and the downstream nonribosomal peptide synthetase (NRPS) amidates the carboxyl end of the polyketide with the tyrosine precursor. Because ACE1 lacks a designated enoylreductase (ER) domain, the required activity is provided the enoyl reductase RAP1. Reduction by the hydrolyase ORFZ, followed by dehydration and intra-molecular Diels-Alder cyclization by the Diels-Alderase ORF3 then yield the required isoindolone-fused macrocycle. A number of oxidative steps catalyzed by the tailoring enzymes identified within the cluster, including cytochrome P450 monooxygenases CYP1 to CYP4, the FAD-linked oxidoreductase OXR2 and the short-chain dehydrogenase/reductase OXR1, are further required to afford the final cytochalasans that confer avirulence and which have still to be identified. The monooxygenase CYP1 has been shown to be a site-selective C-18 hydroxylase whereas the function of CYP3 is the site-selective epoxidation of the C-6/C-7 olefin that is present in some intermediate compounds. Finally, SYN2 and RAP2 are not required for avirulence in Pi33 resistant rice cultivars. The chain is Trans-enoyl reductase RAP1 from Pyricularia oryzae (strain 70-15 / ATCC MYA-4617 / FGSC 8958) (Rice blast fungus).